A 460-amino-acid polypeptide reads, in one-letter code: Tol-Pal system protein TolB (460 aa).

Residues methionine 1–serine 22 form the signal peptide.

It belongs to the TolB family. In terms of assembly, the Tol-Pal system is composed of five core proteins: the inner membrane proteins TolA, TolQ and TolR, the periplasmic protein TolB and the outer membrane protein Pal. They form a network linking the inner and outer membranes and the peptidoglycan layer.

The protein localises to the periplasm. Part of the Tol-Pal system, which plays a role in outer membrane invagination during cell division and is important for maintaining outer membrane integrity. TolB occupies a key intermediary position in the Tol-Pal system because it communicates directly with both membrane-embedded components, Pal in the outer membrane and TolA in the inner membrane. This chain is Tol-Pal system protein TolB, found in Blochmanniella floridana.